The following is a 409-amino-acid chain: NADH-ubiquinone oxidoreductase chain 4 (409 aa).

The next 13 helical transmembrane spans lie at 9-29, 44-64, 68-88, 90-110, 125-145, 160-180, 194-214, 221-241, 246-268, 273-295, 305-325, 352-372, and 389-409; these read LYFFFEPVLFFFFMVVFGFVA, SFSFILLIVMSLFILGVVLLS, FMLLLLSEVLVVVCVFFFVPS, VILMYMYFELSMFPILVMILG, IFYAALCSFPFLFVYFKSFFF, VFVLSLSFMMKFPVYFLHLWL, LLAGLLLKLGTAGFLRILGCL, VWIVLAFLGMILASFCCMFQS, LAAYSSITHMSFVLMALVFIIMS, GVILMLAHGYTSTLMFYLVGEFY, YMSSFFGSGMIMALLFAVVFL, FSFWVLFVYFFSAFYYSIYLL, and VGFSVPLVFMMYNIFWMSVFF.

This sequence belongs to the complex I subunit 4 family.

It is found in the mitochondrion membrane. It catalyses the reaction a ubiquinone + NADH + 5 H(+)(in) = a ubiquinol + NAD(+) + 4 H(+)(out). In terms of biological role, core subunit of the mitochondrial membrane respiratory chain NADH dehydrogenase (Complex I) that is believed to belong to the minimal assembly required for catalysis. Complex I functions in the transfer of electrons from NADH to the respiratory chain. The immediate electron acceptor for the enzyme is believed to be ubiquinone. This Ascaris suum (Pig roundworm) protein is NADH-ubiquinone oxidoreductase chain 4 (ND4).